Here is a 1024-residue protein sequence, read N- to C-terminus: Error-prone DNA polymerase (1024 aa).

Belongs to the DNA polymerase type-C family. DnaE2 subfamily.

Its subcellular location is the cytoplasm. The catalysed reaction is DNA(n) + a 2'-deoxyribonucleoside 5'-triphosphate = DNA(n+1) + diphosphate. DNA polymerase involved in damage-induced mutagenesis and translesion synthesis (TLS). It is not the major replicative DNA polymerase. The protein is Error-prone DNA polymerase of Vibrio campbellii (strain ATCC BAA-1116).